A 402-amino-acid polypeptide reads, in one-letter code: NADH-quinone oxidoreductase subunit D (402 aa).

It belongs to the complex I 49 kDa subunit family. NDH-1 is composed of 14 different subunits. Subunits NuoB, C, D, E, F, and G constitute the peripheral sector of the complex.

The protein localises to the cell inner membrane. It carries out the reaction a quinone + NADH + 5 H(+)(in) = a quinol + NAD(+) + 4 H(+)(out). In terms of biological role, NDH-1 shuttles electrons from NADH, via FMN and iron-sulfur (Fe-S) centers, to quinones in the respiratory chain. The immediate electron acceptor for the enzyme in this species is believed to be ubiquinone. Couples the redox reaction to proton translocation (for every two electrons transferred, four hydrogen ions are translocated across the cytoplasmic membrane), and thus conserves the redox energy in a proton gradient. The polypeptide is NADH-quinone oxidoreductase subunit D (Rhodopseudomonas palustris (strain ATCC BAA-98 / CGA009)).